The sequence spans 349 residues: Glycerol-3-phosphate dehydrogenase [NAD(+)], cytoplasmic (349 aa).

10 to 15 (GSGNWG) lines the NAD(+) pocket. Lys-120 serves as a coordination point for substrate. An NAD(+)-binding site is contributed by Ala-153. Ser-154 carries the phosphoserine modification. The Proton acceptor role is filled by Lys-204. Arg-269 provides a ligand contact to NAD(+). 269–270 (RN) contributes to the substrate binding site. N6-succinyllysine is present on Lys-289. Lys-296 and Gln-298 together coordinate NAD(+). A Phosphotyrosine modification is found at Tyr-326.

It belongs to the NAD-dependent glycerol-3-phosphate dehydrogenase family. As to quaternary structure, homodimer.

It localises to the cytoplasm. It catalyses the reaction sn-glycerol 3-phosphate + NAD(+) = dihydroxyacetone phosphate + NADH + H(+). Functionally, has glycerol-3-phosphate dehydrogenase activity. The protein is Glycerol-3-phosphate dehydrogenase [NAD(+)], cytoplasmic of Rattus norvegicus (Rat).